The chain runs to 88 residues: Exodeoxyribonuclease 7 small subunit (88 aa).

The disordered stretch occupies residues 68 to 88; sequence SDPMHPDDGEPFDPSLVSTSQ.

This sequence belongs to the XseB family. As to quaternary structure, heterooligomer composed of large and small subunits.

It is found in the cytoplasm. It carries out the reaction Exonucleolytic cleavage in either 5'- to 3'- or 3'- to 5'-direction to yield nucleoside 5'-phosphates.. Bidirectionally degrades single-stranded DNA into large acid-insoluble oligonucleotides, which are then degraded further into small acid-soluble oligonucleotides. The protein is Exodeoxyribonuclease 7 small subunit of Xylella fastidiosa (strain 9a5c).